We begin with the raw amino-acid sequence, 129 residues long: Small ribosomal subunit protein uS9 (129 aa).

Belongs to the universal ribosomal protein uS9 family.

The protein is Small ribosomal subunit protein uS9 of Helicobacter pylori (strain P12).